A 1044-amino-acid chain; its full sequence is Integrin alpha-8 (1044 aa).

Positions 1–23 (MPRRQPPRPLLLLSALLCAPASA) are cleaved as a signal peptide. Over 24-991 (FNLDEEKLTV…WSTPNVSFVI (968 aa)) the chain is Extracellular. FG-GAP repeat units follow at residues 28–90 (EEKL…RCRQ), 104–165 (NGTR…AYAE), 170–222 (RNSN…ITNY), 236–288 (QTGV…SSDL), 289–354 (TFIQ…FLFR), 355–413 (DPQI…GLKT), and 417–480 (QVLN…LNPM). N-linked (GlcNAc...) asparagine glycosylation is present at Asn66. A disulfide bond links Cys81 and Cys88. An N-linked (GlcNAc...) asparagine glycan is attached at Asn104. A disulfide bond links Cys132 and Cys153. Residue Asn159 is glycosylated (N-linked (GlcNAc...) asparagine). Cys169 and Cys182 are joined by a disulfide. Residue Asn221 is glycosylated (N-linked (GlcNAc...) asparagine). The Ca(2+) site is built by Glu257, Thr259, Asp261, and Glu265. Residues Asn284 and Asn293 are each glycosylated (N-linked (GlcNAc...) asparagine). The Ca(2+) site is built by Asp311, Asn313, Asp315, Leu317, Asp319, Asp377, Asn379, Asp381, Tyr383, and Asp385. The Cell attachment site motif lies at 437 to 439 (RGD). Ca(2+)-binding residues include Asp441, Asp443, Asn445, Tyr447, and Asp449. Asn486 carries an N-linked (GlcNAc...) asparagine glycan. 2 cysteine pairs are disulfide-bonded: Cys489-Cys500 and Cys506-Cys562. Asn587 carries an N-linked (GlcNAc...) asparagine glycan. Disulfide bonds link Cys623–Cys629 and Cys695–Cys708. 7 N-linked (GlcNAc...) asparagine glycosylation sites follow: Asn701, Asn719, Asn751, Asn762, Asn818, Asn877, and Asn904. 2 cysteine pairs are disulfide-bonded: Cys849–Cys905 and Cys910–Cys915. N-linked (GlcNAc...) asparagine glycosylation is found at Asn952 and Asn986. A helical membrane pass occupies residues 992–1015 (PLWVIILAIMLGLLVLAVLTLALW). The Cytoplasmic portion of the chain corresponds to 1016–1044 (KCGFFDRARPPQDDMADREQLTNNKTTDA).

The protein belongs to the integrin alpha chain family. In terms of assembly, heterodimer of an alpha and a beta subunit. The alpha subunit is composed of a heavy and a light chain linked by a disulfide bond. Alpha-8 associates with beta-1. Prominently expressed on axons and on cells in contact with basal laminae in embryos.

It is found in the membrane. The protein localises to the cell membrane. Functionally, integrin alpha-8/beta-1 functions in the genesis of kidney and probably of other organs by regulating the recruitment of mesenchymal cells into epithelial structures. It recognizes the sequence R-G-D in a wide array of ligands including TNC, FN1, SPP1, TGFB1, TGFB3 and VTN. NPNT is probably its functional ligand in kidney genesis. Neuronal receptor for TNC it mediates cell-cell interactions and regulates neurite outgrowth of sensory and motor neurons. The sequence is that of Integrin alpha-8 (ITGA8) from Gallus gallus (Chicken).